We begin with the raw amino-acid sequence, 584 residues long: Aspartate--tRNA(Asp/Asn) ligase (584 aa).

Residue Glu-177 coordinates L-aspartate. Residues 201–204 (QLFK) form an aspartate region. Arg-223 contributes to the L-aspartate binding site. Residues 223–225 (RDE) and Gln-232 each bind ATP. His-447 lines the L-aspartate pocket. Residue Glu-481 coordinates ATP. L-aspartate is bound at residue Arg-488. Residue 533–536 (GLDR) coordinates ATP.

Belongs to the class-II aminoacyl-tRNA synthetase family. Type 1 subfamily. As to quaternary structure, homodimer.

It is found in the cytoplasm. The enzyme catalyses tRNA(Asx) + L-aspartate + ATP = L-aspartyl-tRNA(Asx) + AMP + diphosphate. In terms of biological role, aspartyl-tRNA synthetase with relaxed tRNA specificity since it is able to aspartylate not only its cognate tRNA(Asp) but also tRNA(Asn). Reaction proceeds in two steps: L-aspartate is first activated by ATP to form Asp-AMP and then transferred to the acceptor end of tRNA(Asp/Asn). This Chlamydia caviae (strain ATCC VR-813 / DSM 19441 / 03DC25 / GPIC) (Chlamydophila caviae) protein is Aspartate--tRNA(Asp/Asn) ligase.